The primary structure comprises 340 residues: Guanine nucleotide-binding protein G(I)/G(S)/G(T) subunit beta-3 (340 aa).

7 WD repeats span residues 53 to 83 (GHLA…IVWD), 95 to 125 (LRSS…SIYN), 141 to 170 (AHTG…ALWD), 182 to 212 (GHTG…KLWD), 224 to 254 (GHES…RLFD), 268 to 298 (SIIC…NVWD), and 310 to 340 (GHDN…KIWN).

The protein belongs to the WD repeat G protein beta family. In terms of assembly, g proteins are composed of 3 units, alpha, beta and gamma. Interacts with RASD2.

Its function is as follows. Guanine nucleotide-binding proteins (G proteins) are involved as a modulator or transducer in various transmembrane signaling systems. The beta and gamma chains are required for the GTPase activity, for replacement of GDP by GTP, and for G protein-effector interaction. The polypeptide is Guanine nucleotide-binding protein G(I)/G(S)/G(T) subunit beta-3 (GNB3) (Homo sapiens (Human)).